The sequence spans 370 residues: tRNA N(3)-cytidine methyltransferase METTL2 (370 aa).

S-adenosyl-L-methionine is bound by residues Trp72, Tyr76, Gly181, Asp206, Asp232, Leu233, and Ile253.

Belongs to the methyltransferase superfamily. METL family. As to quaternary structure, monomer.

Its subcellular location is the cytoplasm. The catalysed reaction is cytidine(32) in tRNA(Thr) + S-adenosyl-L-methionine = N(3)-methylcytidine(32) in tRNA(Thr) + S-adenosyl-L-homocysteine + H(+). It carries out the reaction cytidine(32) in tRNA(Arg)(CCU) + S-adenosyl-L-methionine = N(3)-methylcytidine(32) in tRNA(Arg)(CCU) + S-adenosyl-L-homocysteine + H(+). Its function is as follows. S-adenosyl-L-methionine-dependent methyltransferase that mediates N(3)-methylcytidine modification of residue 32 of the tRNA anticodon loop of tRNA(Thr)(UGU) and tRNA(Arg)(CCU). N(3)-methylcytidine methylation by METTL2 requires the N6-threonylcarbamoylation of tRNA (t6A37) by the EKC/KEOPS complex as prerequisite. The sequence is that of tRNA N(3)-cytidine methyltransferase METTL2 (METTL2) from Gallus gallus (Chicken).